A 357-amino-acid polypeptide reads, in one-letter code: MEENKQRVKSMINILQLVAPGTPLREGIDNVLRAQTGGLIVLGYNEQIKSIVDGGFHINCAFSPASLYELAKMDGALILNETGSKILIANAQLVPDPSIDSIETGMRHRTAERVAKQTASLVVAISQRRNVITLYQGNLRYTLKDIGVILTKANQAIQTLEKYKAVWNDGITNLGILEFEEVVTMSEVVHVLHSVEMVLRIKNEIVSYIHELGTEGRLIRLQLTELLADLEAEAALLIKDYYQEKTQDHHQILKKLQDLANTQLLEDSDLVKLLGYPGQMSLEESVTPRGYRIASKISRVPPLIIENLINRFKTLQGVCRATINELDDVEGIGEVRAKKIREGLKRIQEHLYMSRHN.

Residues 8–146 form the DAC domain; sequence VKSMINILQL…GNLRYTLKDI (139 aa). ATP is bound by residues Gly75, Leu93, and 106–110; that span reads MRHRT.

Belongs to the DisA family. In terms of assembly, homooctamer. Mg(2+) is required as a cofactor.

The enzyme catalyses 2 ATP = 3',3'-c-di-AMP + 2 diphosphate. In terms of biological role, participates in a DNA-damage check-point that is active prior to asymmetric division when DNA is damaged. DisA forms globular foci that rapidly scan along the chromosomes during sporulation, searching for lesions. When a lesion is present, DisA pauses at the lesion site. This triggers a cellular response that culminates in a temporary block in sporulation initiation. Functionally, also has diadenylate cyclase activity, catalyzing the condensation of 2 ATP molecules into cyclic di-AMP (c-di-AMP). c-di-AMP acts as a signaling molecule that couples DNA integrity with progression of sporulation. The rise in c-di-AMP level generated by DisA while scanning the chromosome, operates as a positive signal that advances sporulation; upon encountering a lesion, the DisA focus arrests at the damaged site and halts c-di-AMP synthesis. The polypeptide is DNA integrity scanning protein DisA (Bacillus mycoides (strain KBAB4) (Bacillus weihenstephanensis)).